Consider the following 185-residue polypeptide: MSSRFLLQLLGFWLLLSQPCRTRVSEEWMDGFIRMCGREYARELIKICGASVGRLALSQEEPALLARQATEVVPSFINKDAEPFDTTLKCLPNLSEELKAVLSEAQASLPELQHAPVLSDSVVSLEGFKKTLHDRLGEAEDGSPPGLKYLQSDTHSRKKRESGGLMSQQCCHVGCSRRSIAKLYC.

The first 22 residues, 1 to 22 (MSSRFLLQLLGFWLLLSQPCRT), serve as a signal peptide directing secretion. 3 disulfide bridges follow: C36-C171, C48-C185, and C170-C175. Residues 58–156 (SQEEPALLAR…LKYLQSDTHS (99 aa)) constitute a propeptide, connecting peptide. The interval 135-161 (RLGEAEDGSPPGLKYLQSDTHSRKKRE) is disordered.

It belongs to the insulin family. Heterodimer of a B chain and an A chain linked by two disulfide bonds.

Its subcellular location is the secreted. In terms of biological role, relaxin is an ovarian hormone that acts with estrogen to produce dilatation of the birth canal in many mammals. The chain is Prorelaxin 1 (Rln1) from Mus musculus (Mouse).